Here is a 415-residue protein sequence, read N- to C-terminus: Casein kinase I isoform delta (415 aa).

In terms of domain architecture, Protein kinase spans 9 to 277; the sequence is YRLGRKIGSG…YLRQLFRNLF (269 aa). Residues 15–23 and Lys-38 contribute to the ATP site; that span reads IGSGSFGDI. The active-site Proton acceptor is the Asp-128. The segment at 278–364 is centrosomal localization signal (CLS); sequence HRQGFSYDYV…TSPRPVSGME (87 aa). Residues 301-315 are compositionally biased toward basic and acidic residues; that stretch reads ADDAERERRDREERL. Positions 301–415 are disordered; the sequence is ADDAERERRD…SSGLQSVVHR (115 aa). The autoinhibitory stretch occupies residues 317-342; it reads HSRNPATRGLPSTASGRLRGTQEVAP. Phosphoserine is present on residues Ser-328 and Ser-331. Residues 347–358 are compositionally biased toward polar residues; that stretch reads TPTSHTANTSPR. The residue at position 370 (Ser-370) is a Phosphoserine. At Arg-375 the chain carries Omega-N-methylarginine. Residues 380 to 400 show a composition bias toward polar residues; the sequence is NVSSSDLTGRQDTSRMSTSQI. A phosphoserine mark is found at Ser-382, Ser-383, Ser-384, Pro-401, Ser-407, and Ser-411.

The protein belongs to the protein kinase superfamily. CK1 Ser/Thr protein kinase family. Casein kinase I subfamily. As to quaternary structure, monomer. Component of the circadian core oscillator, which includes the CRY proteins, CLOCK, or NPAS2, BMAL1 or BMAL2, CSNK1D and/or CSNK1E, TIMELESS and the PER proteins. Interacts directly with PER1 and PER2 which may lead to their degradation. Interacts with MAP1A. Interacts with MAPT/TAU, DBNDD2, AIB1/NCOA3 and ESR1. Interacts with AKAP9/AKAP450; this interaction promotes centrosomal subcellular location. Binds to tubulins in mitotic cells upon DNA damage. Interacts with GJA1. Interacts with SNAPIN. Interacts with DNMT1. Interacts with DDX3X; this interaction enhances CSNK1D kinase activity in vitro, but it is unclear whether this interaction is physiologically relevant. Interacts with FAM83A, FAM83B, FAM83E and FAM83H (via DUF1669). Post-translationally, autophosphorylated on serine and threonine residues; this autophosphorylation represses activity. Reactivated by phosphatase-mediated dephosphorylation. May be dephosphorylated by PP1. In terms of tissue distribution, expressed ubiquitously. However, kinase activity is not uniform, with highest kinase activity in splenocytes.

The protein localises to the cytoplasm. Its subcellular location is the nucleus. It is found in the cytoskeleton. It localises to the microtubule organizing center. The protein resides in the centrosome. The protein localises to the perinuclear region. Its subcellular location is the cell membrane. It is found in the spindle. It localises to the golgi apparatus. It catalyses the reaction L-seryl-[protein] + ATP = O-phospho-L-seryl-[protein] + ADP + H(+). The enzyme catalyses L-threonyl-[protein] + ATP = O-phospho-L-threonyl-[protein] + ADP + H(+). The catalysed reaction is L-seryl-[tau protein] + ATP = O-phospho-L-seryl-[tau protein] + ADP + H(+). It carries out the reaction L-threonyl-[tau protein] + ATP = O-phospho-L-threonyl-[tau protein] + ADP + H(+). With respect to regulation, exhibits substrate-dependent heparin activation. Drug-mediated inhibition leads to a delay of the oscillations with the magnitude of this effect dependent upon the timing of drug administration. Inhibited by phosphorylation. Its function is as follows. Essential serine/threonine-protein kinase that regulates diverse cellular growth and survival processes including Wnt signaling, DNA repair and circadian rhythms. It can phosphorylate a large number of proteins. Casein kinases are operationally defined by their preferential utilization of acidic proteins such as caseins as substrates. Phosphorylates connexin-43/GJA1, MAP1A, SNAPIN, MAPT/TAU, TOP2A, DCK, HIF1A, EIF6, p53/TP53, DVL2, DVL3, ESR1, AIB1/NCOA3, DNMT1, PKD2, YAP1, PER1 and PER2. Central component of the circadian clock. In balance with PP1, determines the circadian period length through the regulation of the speed and rhythmicity of PER1 and PER2 phosphorylation. Controls PER1 and PER2 nuclear transport and degradation. YAP1 phosphorylation promotes its SCF(beta-TRCP) E3 ubiquitin ligase-mediated ubiquitination and subsequent degradation. DNMT1 phosphorylation reduces its DNA-binding activity. Phosphorylation of ESR1 and AIB1/NCOA3 stimulates their activity and coactivation. Phosphorylation of DVL2 and DVL3 regulates WNT3A signaling pathway that controls neurite outgrowth. Phosphorylates NEDD9/HEF1. EIF6 phosphorylation promotes its nuclear export. Triggers down-regulation of dopamine receptors in the forebrain. Activates DCK in vitro by phosphorylation. TOP2A phosphorylation favors DNA cleavable complex formation. May regulate the formation of the mitotic spindle apparatus in extravillous trophoblast. Modulates connexin-43/GJA1 gap junction assembly by phosphorylation. Probably involved in lymphocyte physiology. Regulates fast synaptic transmission mediated by glutamate. The polypeptide is Casein kinase I isoform delta (Csnk1d) (Mus musculus (Mouse)).